The primary structure comprises 369 residues: MKYKRIVFKVGTSSLTNEDGSLSRSKVKDITQQLAMLHEAGHELILVSSGAIAAGFGALGFKKRPTKIADKQASAAVGQGLLLEEYTTNLLLRQIVSAQILLTQDDFVDKRRYKNAHQALSVLLNRGAIPIINENDSVVIDELKVGDNDTLSAQVAAMVQADLLVFLTDVDGLYTGNPNSDPRAKRLERIETINCEIIDMAGGAGSSNGTGGMLTKIKAATIATESGVPVYICSSLKSDSMIEAAEETEDGSYFVAQEKGLRTQKQWLAFYAQSQGSIWVDKGAAEALSQHGKSLLLSGIVEAEGVFSYGDIVTVFDKESGKSLGKGRVQFGASALEDMLRSQKAKGVLIYRDDWISITPEIQLLFTEF.

K9 is a binding site for ATP. The substrate site is built by S49, D136, and N148. Residues 168–169 (TD) and 210–216 (TGGMLTK) contribute to the ATP site. Residues 275-355 (QGSIWVDKGA…KGVLIYRDDW (81 aa)) form the PUA domain.

It belongs to the glutamate 5-kinase family.

Its subcellular location is the cytoplasm. The enzyme catalyses L-glutamate + ATP = L-glutamyl 5-phosphate + ADP. It participates in amino-acid biosynthesis; L-proline biosynthesis; L-glutamate 5-semialdehyde from L-glutamate: step 1/2. Functionally, catalyzes the transfer of a phosphate group to glutamate to form L-glutamate 5-phosphate. The chain is Glutamate 5-kinase from Streptococcus pneumoniae (strain ATCC 700669 / Spain 23F-1).